The following is a 782-amino-acid chain: Cysteine-rich protein 2-binding protein (782 aa).

S4 carries the post-translational modification Phosphoserine. A disordered region spans residues 13-33 (RHDDEATRTSTSEGLEEGEVE). K231 is subject to N6-acetyllysine. Positions 251 to 282 (PVESAMELKEKRSRTQEAKDIRRAQKEAAGFL) are disordered. The segment covering 256-276 (MELKEKRSRTQEAKDIRRAQK) has biased composition (basic and acidic residues). S285 carries the phosphoserine modification. K292 bears the N6-acetyllysine mark. The segment covering 315-335 (LSSSDRTPLTSPSPSPSLDFS) has biased composition (low complexity). Disordered regions lie at residues 315 to 346 (LSSS…HSAT) and 400 to 460 (VRKK…EPRY). 2 stretches are compositionally biased toward basic and acidic residues: residues 405–426 (RGPE…RMDI) and 446–459 (KPQL…KEPR). S416 carries the phosphoserine modification. The region spanning 638 to 782 (LDYCYVRPNH…KHAFFLRLRR (145 aa)) is the N-acetyltransferase domain.

As to quaternary structure, interacts with the LIM 1 domain of CSRP2. Component of the ADA2A-containing complex (ATAC), composed of CSRP2BP, KAT2A, TADA2L, TADA3L, ZZ3, MBIP, WDR5, YEATS2, CCDC101 and DR1. In the complex, it probably interacts directly with KAT2A, MBIP and WDR5. As to expression, expressed in skeletal muscle, heart, lung, placenta, brain, liver, pancreas and kidney. High expression in skeletal muscle and heart. Lower expression in lung.

The protein localises to the nucleus. It is found in the cytoplasm. Functionally, component of the ATAC complex, a complex with histone acetyltransferase activity on histones H3 and H4. May function as a scaffold for the ATAC complex to promote ATAC complex stability. Has also weak histone acetyltransferase activity toward histone H4. Required for the normal progression through G1 and G2/M phases of the cell cycle. The polypeptide is Cysteine-rich protein 2-binding protein (Homo sapiens (Human)).